The chain runs to 430 residues: F-box protein At1g49990 (430 aa).

One can recognise an F-box domain in the interval 1–45 (METGRRRTIPEVEILARLPLRSIARFKSVCKRWKSVIESDYFRRL).

This Arabidopsis thaliana (Mouse-ear cress) protein is F-box protein At1g49990.